The primary structure comprises 202 residues: ATP-dependent Clp protease proteolytic subunit (202 aa).

Catalysis depends on serine 106, which acts as the Nucleophile. The active site involves histidine 131.

It belongs to the peptidase S14 family. In terms of assembly, fourteen ClpP subunits assemble into 2 heptameric rings which stack back to back to give a disk-like structure with a central cavity, resembling the structure of eukaryotic proteasomes.

It localises to the cytoplasm. It carries out the reaction Hydrolysis of proteins to small peptides in the presence of ATP and magnesium. alpha-casein is the usual test substrate. In the absence of ATP, only oligopeptides shorter than five residues are hydrolyzed (such as succinyl-Leu-Tyr-|-NHMec, and Leu-Tyr-Leu-|-Tyr-Trp, in which cleavage of the -Tyr-|-Leu- and -Tyr-|-Trp bonds also occurs).. Its function is as follows. Cleaves peptides in various proteins in a process that requires ATP hydrolysis. Has a chymotrypsin-like activity. Plays a major role in the degradation of misfolded proteins. This is ATP-dependent Clp protease proteolytic subunit from Albidiferax ferrireducens (strain ATCC BAA-621 / DSM 15236 / T118) (Rhodoferax ferrireducens).